We begin with the raw amino-acid sequence, 239 residues long: RNA polymerase sigma-E factor (239 aa).

Residues 1 to 29 (MKKLKLRLTHLWYKLLMKLGLKSDEVYYI) constitute a propeptide, removed by SpoIIGA. Positions 86–99 (DLISIGTIGLIKAV) match the Polymerase core binding motif. A DNA-binding region (H-T-H motif) is located at residues 206-225 (QKDVADMMGISQSYISRLEK).

It belongs to the sigma-70 factor family. Post-translationally, proteolytically cleaved in the N-terminus by SpoIIGA to yield the active peptide.

Sigma factors are initiation factors that promote the attachment of RNA polymerase to specific initiation sites and are then released. This sigma factor is responsible for the expression of sporulation specific genes. The chain is RNA polymerase sigma-E factor (sigE) from Bacillus subtilis (strain 168).